Consider the following 92-residue polypeptide: DNA-directed RNA polymerase subunit Rpo11 (92 aa).

This sequence belongs to the archaeal Rpo11/eukaryotic RPB11/RPC19 RNA polymerase subunit family. As to quaternary structure, part of the RNA polymerase complex.

It localises to the cytoplasm. It catalyses the reaction RNA(n) + a ribonucleoside 5'-triphosphate = RNA(n+1) + diphosphate. Its function is as follows. DNA-dependent RNA polymerase (RNAP) catalyzes the transcription of DNA into RNA using the four ribonucleoside triphosphates as substrates. The sequence is that of DNA-directed RNA polymerase subunit Rpo11 from Halorubrum lacusprofundi (strain ATCC 49239 / DSM 5036 / JCM 8891 / ACAM 34).